The primary structure comprises 367 residues: MNLLTVSTDLISIFLFTTLFLFFARKVAKKVGLVDKPNFRKRHQGLIPLVGGISVYAGICFTFGIVDYYIPHASLYLACAGVLVFIGALDDRFDISVKIRATIQAAVGIVMMVFGNLYLSSLGYIFGSWEMVLGPFGYFLTLFAVWAAINAFNMVDGIDGLLGGLSCVSFAAIGMILWFDGQTSLAIWCFAMIAAILPYIMLNLGILGRRYKVFMGDAGSTLIGFTVIWILLETTQGKTHPISPVTALWIIAIPLMDMVAIMYRRLRKGMSPFSPDRQHIHHLIMRAGFTSRQAFVLITLAAALLASIGVLAEYSHFVPEWVMLVLFLLAFLLYGYCIKRAWKVARFIKRVKRRLRRNRGGSPNLTK.

10 consecutive transmembrane segments (helical) span residues 3–23 (LLTV…FLFF), 46–66 (LIPL…FGIV), 69–89 (YIPH…IGAL), 132–152 (VLGP…INAF), 158–178 (IDGL…MILW), 187–207 (IWCF…LGIL), 213–233 (VFMG…ILLE), 242–262 (ISPV…VAIM), 294–314 (AFVL…LAEY), and 318–338 (VPEW…GYCI).

It belongs to the glycosyltransferase 4 family. WecA subfamily. Mg(2+) serves as cofactor. It depends on Mn(2+) as a cofactor.

It localises to the cell inner membrane. The enzyme catalyses di-trans,octa-cis-undecaprenyl phosphate + UDP-N-acetyl-alpha-D-glucosamine = N-acetyl-alpha-D-glucosaminyl-di-trans,octa-cis-undecaprenyl diphosphate + UMP. It functions in the pathway bacterial outer membrane biogenesis; LPS O-antigen biosynthesis. Its pathway is bacterial outer membrane biogenesis; enterobacterial common antigen biosynthesis. Its function is as follows. Catalyzes the transfer of the GlcNAc-1-phosphate moiety from UDP-GlcNAc onto the carrier lipid undecaprenyl phosphate (C55-P), yielding GlcNAc-pyrophosphoryl-undecaprenyl (GlcNAc-PP-C55). This is Undecaprenyl-phosphate alpha-N-acetylglucosaminyl 1-phosphate transferase from Escherichia coli O157:H7.